The chain runs to 425 residues: Intermediate conductance calcium-activated potassium channel protein 4 (425 aa).

A helical transmembrane segment spans residues 30–50 (LVLAGTGIGLMVLHAEMLWFL). The chain crosses the membrane as a helical span at residues 59–79 (LLVKCLITLSTAFLLCLIVVF). The chain crosses the membrane as a helical span at residues 105–121 (VAQILLELLVCGVHPVP). The helical transmembrane segment at 141 to 161 (GFLGEGEALLSLAMLLRLYLV) threads the bilayer. Residues 205–225 (LLLGLTLGLWLTTAWVLSVAE) traverse the membrane as a helical segment. An intramembrane region (pore-forming) is located at residues 239-259 (LWLIPITFLTIGYGDVVPGTL). Residues 263–283 (IVCLCTGVMGVCCTALLVAVV) traverse the membrane as a helical segment. A calmodulin-binding region spans residues 284–345 (ARKLEFNKAE…RRHQRKMLAA (62 aa)). A Phosphohistidine modification is found at His356.

This sequence belongs to the potassium channel KCNN family. KCa3.1/KCNN4 subfamily. As to quaternary structure, homodimer. Homotetramer. Heterotetramer of potassium channel proteins. Interacts with MTMR6; this interaction leads to selective dephosphorylation of PI(3)P in a lipid microdomain adjacent to KCNN4, resulting in a decrease of intermediate conductance calcium-activated potassium channel activity. Interacts (via the C-tail domain) with CALM1; the calmodulin binding is constitutive, does not require calcium and mediates calcium-dependent gating and four calmodulin molecules bind to one channel tetramer. Post-translationally, phosphorylation at His-356 by NDKB activates the intermediate conductance calcium-activated potassium channel activity, and conversely it's dephosphorylation by PHPT1 inhibits this activity.

It is found in the cell membrane. The protein resides in the cell projection. It localises to the ruffle membrane. It catalyses the reaction K(+)(in) = K(+)(out). Its function is as follows. Intermediate conductance calcium-activated potassium channel that mediates the voltage-independent transmembrane transfer of potassium across the cell membrane through a constitutive interaction with calmodulin which binds the intracellular calcium allowing its opening. The current is characterized by a voltage-independent activation, an intracellular calcium concentration increase-dependent activation and a single-channel conductance of about 25 picosiemens. Also presents an inwardly rectifying current, thus reducing its already small outward conductance of potassium ions, which is particularly the case when the membrane potential displays positive values, above + 20 mV. Controls calcium influx during vascular contractility by being responsible of membrane hyperpolarization induced by vasoactive factors in proliferative vascular smooth muscle cell types. Following calcium influx, the consecutive activation of KCNN4 channel leads to a hyperpolarization of the cell membrane potential and hence an increase of the electrical driving force for further calcium influx promoting sustained calcium entry in response to stimulation with chemotactic peptides. Required for maximal calcium influx and proliferation during the reactivation of naive T-cells. Plays a role in the late stages of EGF-induced macropinocytosis through activation by PI(3)P. The protein is Intermediate conductance calcium-activated potassium channel protein 4 of Rattus norvegicus (Rat).